Consider the following 507-residue polypeptide: MMKHGKGEDVFKYIEKTNEKNLYRINKGLVPGMNVEGNMYVNEKLKLLIDEEIKMYQLNKSSTFLPAVIQIANVSTLPGIVKASIALPDVHAGYGFSIGNVAAFDMNNEKAVISPGGVGFDINCGVRLIRTNLFYNDIKDKQEELAQLLFNHIPVGVGSQGFILCNQNNLDDALSLGMDWSVKEGYSWIEDKLNCEDNGRSLYANSDYVSVRAKKRGITQMGTLGAGNHYAEIQIVDEIYDKKSAKLMGIEKKNQVCIMIHSGSRGLGHQIATDALIEMEKVMSKYKINVIDKQLACTPIHSPEGQNYLKAMGAACNFAWINRSSMTFLARQAFSKVFNQSPDDLDMHVIYDVSHNIAKIEEHFINGKVQNLLVHRKGSTRAFPPFHPLVPLDYQYCGQPILIGGTMGTYSYVLTGTEKAMENTFGSTCHGAGRALSRNKSRNSLSYSDVLSNLKEKNISIRVASPKLIMEEAPESYKNVSEVVQTCHDSGISNKAFRLRPVAVIKG.

Residues Asp121, Cys124, His229, His261, and His355 each coordinate Mn(2+). A GMP-binding site is contributed by 228 to 232; that stretch reads NHYAE. Residues 355–356, 404–407, Ser411, 430–433, and Lys506 each bind GMP; these read HN, GGTM, and HGAG. His430 functions as the GMP-histidine intermediate in the catalytic mechanism.

It belongs to the RtcB family. As to quaternary structure, catalytic component of the tRNA-splicing ligase complex. The cofactor is Mn(2+).

The enzyme catalyses a 3'-end 3'-phospho-ribonucleotide-RNA + a 5'-end dephospho-ribonucleoside-RNA + GTP = a ribonucleotidyl-ribonucleotide-RNA + GMP + diphosphate. It catalyses the reaction a 3'-end 2',3'-cyclophospho-ribonucleotide-RNA + a 5'-end dephospho-ribonucleoside-RNA + GTP + H2O = a ribonucleotidyl-ribonucleotide-RNA + GMP + diphosphate + H(+). Functionally, catalytic subunit of the tRNA-splicing ligase complex that acts by directly joining spliced tRNA halves to mature-sized tRNAs by incorporating the precursor-derived splice junction phosphate into the mature tRNA as a canonical 3',5'-phosphodiester. May act as an RNA ligase with broad substrate specificity, and may function toward other RNAs. This chain is RNA-splicing ligase RtcB homolog, found in Plasmodium yoelii yoelii.